The chain runs to 945 residues: Microtubule cross-linking factor 3 (945 aa).

Composition is skewed to low complexity over residues 1-23 (MSQPPSGGAAPAATSASAAAAAT), 72-93 (QQQLQQQQQQGNKITGRSTSGT), and 110-126 (PKGAVPGAVQPAPGAEG). A signal peptide spans 1-25 (MSQPPSGGAAPAATSASAAAAATEA). 4 disordered regions span residues 1–250 (MSQP…SYWK), 265–293 (KERAAAAAAAAQMHTKNGGGGSRSSPVAG), 307–366 (SPMA…TLKN), and 494–522 (LSLKRRGSKDLPKSEKKAQQTPTEDDNED). Over residues 141-151 (GQPEEAPREIE) the composition is skewed to basic and acidic residues. Residues 164-179 (GGVGGGGEGGGAGGGP) are compositionally biased toward gly residues. Residues 219–235 (TAATSKTPGPGSRNSGS) are compositionally biased toward low complexity. Over residues 236–247 (GSTGSGSGGGGS) the composition is skewed to gly residues. The segment covering 328–345 (AMQAAAPPSSQPHSQQLQ) has biased composition (low complexity). Positions 340-724 (HSQQLQEQED…GKVMQLQYEN (385 aa)) form a coiled coil. Composition is skewed to basic and acidic residues over residues 353-366 (EMEKLREENETLKN) and 494-511 (LSLKRRGSKDLPKSEKKA). Ser-567 bears the Phosphoserine mark. Residues 741 to 811 (GIRGSPRDSD…PWPKSFSDRQ (71 aa)) form a disordered region. Residues 745–766 (SPRDSDAESDAGKKESDDDSRP) show a composition bias toward basic and acidic residues. Ser-779 bears the Phosphoserine mark. Residues 809 to 833 (DRQQMKDIRSEAERLGKTIDRLIAD) are a coiled coil. A helical transmembrane segment spans residues 913 to 933 (PIILLILILVLFSSLSYTTIF).

The protein belongs to the MTCL family.

It is found in the membrane. In Mus musculus (Mouse), this protein is Microtubule cross-linking factor 3 (Mtcl3).